Consider the following 454-residue polypeptide: MKVPRVIIAGTNSGVGKTTTTLAVISALKNKGLKVKPYKVGPDYIDPQFHSLLAGATSDNLDLWMIPRERIFQLLADASTSFNISVIEGVMGLLDGFGSTDEGSTLDLARITGTPIILVIDGYGLSGSAAAIVKGFKDFSGDLLAGVIVTRVSGERHYDLIKKAIEDNTNVRVLGYIEKNDEVRLESRHLGLVQASELNSFSDYIERLSKVTHINVDGIIEIARASRDLDPKFSPLLSRVGYAKIAVAYDSAFDFYYEENFRVLRNLGAELVFFSPLNNEIPPEDTDGLYIGGGYPEVFAKKLAYAVDARENIAKLIKKGVPTLAECGGYMYLTRTIVGQDGIEYPGVGIVPAKTFLTDKLILGYREIVSKTSNMLLRHGETARGHEFHRSTIQFQDKVDHPFVLKYKDRFEEDGYYSNNVVASYVHIHFLSNIAIPKRFVEECIRYSKKREIS.

Residues 244–435 (KIAVAYDSAF…VHIHFLSNIA (192 aa)) enclose the GATase cobBQ-type domain. Catalysis depends on Cys327, which acts as the Nucleophile.

This sequence belongs to the CobB/CbiA family. It depends on Mg(2+) as a cofactor.

It catalyses the reaction cob(II)yrinate + 2 L-glutamine + 2 ATP + 2 H2O = cob(II)yrinate a,c diamide + 2 L-glutamate + 2 ADP + 2 phosphate + 2 H(+). Its pathway is cofactor biosynthesis; adenosylcobalamin biosynthesis; cob(II)yrinate a,c-diamide from sirohydrochlorin (anaerobic route): step 10/10. Its function is as follows. Catalyzes the ATP-dependent amidation of the two carboxylate groups at positions a and c of cobyrinate, using either L-glutamine or ammonia as the nitrogen source. This Thermoplasma volcanium (strain ATCC 51530 / DSM 4299 / JCM 9571 / NBRC 15438 / GSS1) protein is Cobyrinate a,c-diamide synthase.